A 353-amino-acid polypeptide reads, in one-letter code: 3'(2'),5'-bisphosphate nucleotidase (353 aa).

The active-site Proton acceptor is the Asp-50. Mg(2+) is bound by residues Glu-73, Asp-136, Ile-138, and Asp-139. The active-site Proton acceptor is the Thr-141. Adenosine 3',5'-bisphosphate-binding residues include Thr-141, His-232, Ser-256, Lys-259, Arg-273, and Asp-286. AMP-binding residues include His-232, Ser-256, Lys-259, Arg-273, and Asp-286. Asp-286 provides a ligand contact to Mg(2+).

The protein belongs to the inositol monophosphatase superfamily. Mg(2+) is required as a cofactor.

It carries out the reaction 3'-phosphoadenylyl sulfate + H2O = adenosine 5'-phosphosulfate + phosphate. The catalysed reaction is adenosine 3',5'-bisphosphate + H2O = AMP + phosphate. It catalyses the reaction adenosine 2',5'-bisphosphate + H2O = AMP + phosphate. The enzyme catalyses 1D-myo-inositol 1,4-bisphosphate + H2O = 1D-myo-inositol 4-phosphate + phosphate. It carries out the reaction 1D-myo-inositol 1,3,4-trisphosphate + H2O = 1D-myo-inositol 3,4-bisphosphate + phosphate. Inhibited by Li(+) and Na(+). Phosphatase that converts adenosine 3'-phosphate 5'-phosphosulfate (PAPS) to adenosine 5'-phosphosulfate (APS) and 3'(2')-phosphoadenosine 5'-phosphate (PAP) to AMP. May regulate the flux of sulfur in the sulfur-activation pathway by converting PAPS to APS. Is also able to hydrolyze inositol 1,4-bisphosphate (Ins(1,4)P2) and inositol 1,3,4-trisphosphate (Ins(1,3,4)P3), but is not active on inositol 1,4,5-trisphosphate, inositol 1-phosphate, fructose 1,6-bisphosphate, AMP and ATP. Its function is as follows. Confers resistance to lithium. The protein is 3'(2'),5'-bisphosphate nucleotidase (tol1) of Schizosaccharomyces pombe (strain 972 / ATCC 24843) (Fission yeast).